The chain runs to 145 residues: Photosystem I reaction center subunit XI (145 aa).

The next 3 membrane-spanning stretches (helical) occupy residues 48–68, 75–95, and 125–145; these read LEIG…LGPL, LLVG…GLTI, and IGAF…SFFA.

It belongs to the PsaL family.

It localises to the plastid. The protein resides in the chloroplast thylakoid membrane. This chain is Photosystem I reaction center subunit XI, found in Emiliania huxleyi (Coccolithophore).